Here is a 609-residue protein sequence, read N- to C-terminus: Arginine--tRNA ligase (609 aa).

A 'HIGH' region motif is present at residues 132-142; sequence ANPTSSLHVGH.

It belongs to the class-I aminoacyl-tRNA synthetase family. In terms of assembly, monomer.

Its subcellular location is the cytoplasm. The enzyme catalyses tRNA(Arg) + L-arginine + ATP = L-arginyl-tRNA(Arg) + AMP + diphosphate. This is Arginine--tRNA ligase from Psychrobacter sp. (strain PRwf-1).